Here is a 578-residue protein sequence, read N- to C-terminus: Palmitoyltransferase ZDHHC1 (578 aa).

Topologically, residues 1 to 41 (MDVCSKNSNRTAPVSEGGIRRADVPLCSRTNGWSWPPHPFQ) are cytoplasmic. The chain crosses the membrane as a helical span at residues 42 to 62 (FLAWLLYLYFAVTGFGVFVPL). At 63–71 (LPTHWIPAG) the chain is on the lumenal side. A helical membrane pass occupies residues 72 to 92 (YICTGITFVCHLFMHLMAVSI). The Cytoplasmic segment spans residues 93 to 174 (DPADYNVRAK…YWLFLNSVIS (82 aa)). The DHHC domain occupies 121-173 (ENCHCYLCEVDVGPKSKHCSACNKCVASFDHHCRWLNNCVGSRNYWLFLNSVI). Cys153 (S-palmitoyl cysteine intermediate) is an active-site residue. Residues 175–195 (ALLGIVLVVVIASYVFIEFFL) form a helical membrane-spanning segment. At 196–230 (DPSKLRSDKHFQQVRNESVVWFVFLPVAPVTTAGP) the chain is on the lumenal side. A helical transmembrane segment spans residues 231-251 (AIPALAGVTIALGLLSALLLG). At 252 to 578 (HLLCFHIYLM…PSSRVGTSLA (327 aa)) the chain is on the cytoplasmic side. The span at 278–288 (QEAGDSRKPPP) shows a compositional bias: basic and acidic residues. Disordered regions lie at residues 278-298 (QEAGDSRKPPPENDSGVPKLN), 345-376 (HMDEEEHLPSVLTEQKASPHPHKHAQKKKRKV), 497-517 (SAAGHAAPSPQPRTKRKTAAR), and 532-578 (SMFM…TSLA). Residues 363–376 (PHPHKHAQKKKRKV) show a composition bias toward basic residues. A compositionally biased stretch (basic residues) spans 552 to 561 (AAKRKQTGKK).

It belongs to the DHHC palmitoyltransferase family.

The protein resides in the endosome membrane. The protein localises to the endoplasmic reticulum membrane. It is found in the golgi apparatus. It catalyses the reaction L-cysteinyl-[protein] + hexadecanoyl-CoA = S-hexadecanoyl-L-cysteinyl-[protein] + CoA. Functionally, palmitoyltransferase that catalyzes the addition of palmitate onto various protein substrates, such as ncdn and nlrp3. The sequence is that of Palmitoyltransferase ZDHHC1 from Danio rerio (Zebrafish).